The sequence spans 271 residues: Glutamate racemase (271 aa).

Substrate contacts are provided by residues 9–10 (DS) and 41–42 (YG). Cysteine 72 acts as the Proton donor/acceptor in catalysis. Residue 73 to 74 (NT) coordinates substrate. Catalysis depends on cysteine 183, which acts as the Proton donor/acceptor. 184–185 (TH) serves as a coordination point for substrate.

Belongs to the aspartate/glutamate racemases family.

The enzyme catalyses L-glutamate = D-glutamate. It participates in cell wall biogenesis; peptidoglycan biosynthesis. In terms of biological role, provides the (R)-glutamate required for cell wall biosynthesis. In Exiguobacterium sibiricum (strain DSM 17290 / CCUG 55495 / CIP 109462 / JCM 13490 / 255-15), this protein is Glutamate racemase.